Here is a 105-residue protein sequence, read N- to C-terminus: Large ribosomal subunit protein uL24 (105 aa).

The protein belongs to the universal ribosomal protein uL24 family. As to quaternary structure, part of the 50S ribosomal subunit.

Functionally, one of two assembly initiator proteins, it binds directly to the 5'-end of the 23S rRNA, where it nucleates assembly of the 50S subunit. One of the proteins that surrounds the polypeptide exit tunnel on the outside of the subunit. This is Large ribosomal subunit protein uL24 from Methylobacterium sp. (strain 4-46).